The following is a 131-amino-acid chain: Profilin-2 (131 aa).

Belongs to the profilin family. Occurs in many kinds of cells as a complex with monomeric actin in a 1:1 ratio. In terms of tissue distribution, expressed in the intestinal wall, the spermatheca, and the pharynx.

The protein localises to the cytoplasm. Its subcellular location is the cytoskeleton. Functionally, binds to actin and affects the structure of the cytoskeleton. At high concentrations, profilin prevents the polymerization of actin, whereas it enhances it at low concentrations. By binding to PIP2, it inhibits the formation of IP3 and DG. The sequence is that of Profilin-2 (pfn-2) from Caenorhabditis elegans.